The following is a 132-amino-acid chain: S-protein homolog 19 (132 aa).

The N-terminal stretch at 1-26 (MSGSLAFHIIMSVTFMVFFFGGLCEA) is a signal peptide. A glycan (N-linked (GlcNAc...) asparagine) is linked at Asn87.

It belongs to the plant self-incompatibility (S1) protein family.

It localises to the secreted. This Arabidopsis thaliana (Mouse-ear cress) protein is S-protein homolog 19.